The following is a 381-amino-acid chain: E3 ubiquitin-protein ligase ATL15 (381 aa).

The first 23 residues, 1–23, serve as a signal peptide directing secretion; that stretch reads MVVMSRVSFYSSFLLLLLEVVVA. A helical transmembrane segment spans residues 40–60; the sequence is AIIMIVLVSVFFALGCISVYM. An RING-type; atypical zinc finger spans residues 118-160; sequence CPVCLNEFEDDETLRLIPQCCHVFHPGCIDAWLRSQTTCPLCR.

It belongs to the RING-type zinc finger family. ATL subfamily.

It is found in the membrane. The catalysed reaction is S-ubiquitinyl-[E2 ubiquitin-conjugating enzyme]-L-cysteine + [acceptor protein]-L-lysine = [E2 ubiquitin-conjugating enzyme]-L-cysteine + N(6)-ubiquitinyl-[acceptor protein]-L-lysine.. The protein operates within protein modification; protein ubiquitination. Its function is as follows. E3 ubiquitin-protein ligase able to catalyze polyubiquitination with ubiquitin-conjugating enzyme E2 UBC8, UBC10, UBC11, UBC28 and UBC29 in vitro. This is E3 ubiquitin-protein ligase ATL15 (ATL15) from Arabidopsis thaliana (Mouse-ear cress).